Consider the following 766-residue polypeptide: Dipeptidyl peptidase 4 (766 aa).

At 1 to 6 (MKTPWK) the chain is on the cytoplasmic side. A helical; Signal-anchor for type II membrane protein transmembrane segment spans residues 7 to 27 (VLLGLLGIAALVTVITVPVVL). Topologically, residues 28–766 (LNKGTDDAAA…HFLKQCFSLP (739 aa)) are extracellular. N85, N92, N150, N179, N219, N229, N279, and N321 each carry an N-linked (GlcNAc...) asparagine glycan. 3 disulfide bridges follow: C385–C394, C444–C447, and C454–C472. Residue S630 is the Charge relay system of the active site. C649 and C762 are oxidised to a cystine. N685 is a glycosylation site (N-linked (GlcNAc...) asparagine). Active-site charge relay system residues include D708 and H740.

This sequence belongs to the peptidase S9B family. DPPIV subfamily. Monomer. Homodimer. Heterodimer with Seprase (FAP). Requires homodimerization for optimal dipeptidyl peptidase activity and T-cell costimulation. Found in a membrane raft complex, at least composed of BCL10, CARD11, DPP4 and IKBKB. Associates with collagen. Interacts with PTPRC; the interaction is enhanced in an interleukin-12-dependent manner in activated lymphocytes. Interacts (via extracellular domain) with ADA; does not inhibit its dipeptidyl peptidase activity. Interacts with CAV1 (via the N-terminus); the interaction is direct. Interacts (via cytoplasmic tail) with CARD11 (via PDZ domain); its homodimerization is necessary for interaction with CARD11. Interacts with IGF2R; the interaction is direct. Interacts with GPC3. Post-translationally, the soluble form (Dipeptidyl peptidase 4 soluble form also named SDPP) derives from the membrane form (Dipeptidyl peptidase 4 membrane form also named MDPP) by proteolytic processing. In terms of processing, N- and O-Glycosylated. Phosphorylated. Mannose 6-phosphate residues in the carbohydrate moiety are necessary for interaction with IGF2R in activated T-cells. Mannose 6-phosphorylation is induced during T-cell activation.

The protein resides in the secreted. Its subcellular location is the cell membrane. It is found in the apical cell membrane. It localises to the cell projection. The protein localises to the invadopodium membrane. The protein resides in the lamellipodium membrane. Its subcellular location is the cell junction. It is found in the membrane raft. It catalyses the reaction Release of an N-terminal dipeptide, Xaa-Yaa-|-Zaa-, from a polypeptide, preferentially when Yaa is Pro, provided Zaa is neither Pro nor hydroxyproline.. Its activity is regulated as follows. Inhibited by GPC3 and diprotin A. Cell surface glycoprotein receptor involved in the costimulatory signal essential for T-cell receptor (TCR)-mediated T-cell activation. Acts as a positive regulator of T-cell coactivation, by binding at least ADA, CAV1, IGF2R, and PTPRC. Its binding to CAV1 and CARD11 induces T-cell proliferation and NF-kappa-B activation in a T-cell receptor/CD3-dependent manner. Its interaction with ADA also regulates lymphocyte-epithelial cell adhesion. In association with FAP is involved in the pericellular proteolysis of the extracellular matrix (ECM), the migration and invasion of endothelial cells into the ECM. May be involved in the promotion of lymphatic endothelial cells adhesion, migration and tube formation. When overexpressed, enhanced cell proliferation, a process inhibited by GPC3. Also acts as a serine exopeptidase with a dipeptidyl peptidase activity that regulates various physiological processes by cleaving peptides in the circulation, including many chemokines, mitogenic growth factors, neuropeptides and peptide hormones such as brain natriuretic peptide 32. Removes N-terminal dipeptides sequentially from polypeptides having unsubstituted N-termini provided that the penultimate residue is proline. The chain is Dipeptidyl peptidase 4 (DPP4) from Sus scrofa (Pig).